Here is a 256-residue protein sequence, read N- to C-terminus: Chloroplastic group IIB intron splicing facilitator CRS2, chloroplastic (256 aa).

The N-terminal 45 residues, 1–45, are a transit peptide targeting the chloroplast; sequence MSLLAAAIPSTSSHFSAPFLPSFRMPRKSLTAPLHRIRRPRPFTV. Residue tyrosine 74 participates in tRNA binding. Histidine 79 serves as the catalytic Proton acceptor. Residues tyrosine 124, asparagine 126, and asparagine 172 each contribute to the tRNA site.

The protein belongs to the PTH family. CRS2 subfamily. Interacts with CAF1 and CAF2. Part of large ribonucleo-protein complexes that include group IIB introns and either CAF1 or CAF2.

The protein localises to the plastid. It is found in the chloroplast stroma. In terms of biological role, required for the splicing of group IIB introns in chloroplasts. Forms complexes with either CAF1 or CAF2 which, in turn, interact with RNA and confer intron specificity of the splicing particles. Has no peptidyl-tRNA hydrolase activity. This is Chloroplastic group IIB intron splicing facilitator CRS2, chloroplastic (CRS2) from Zea mays (Maize).